The chain runs to 204 residues: Inactive ribonuclease-like protein 9 (204 aa).

The signal sequence occupies residues M1–F26. Disulfide bonds link C97/C152, C115/C167, and C122/C129. Residues N130 and N142 are each glycosylated (N-linked (GlcNAc...) asparagine).

It belongs to the pancreatic ribonuclease family.

The protein resides in the secreted. Does not exhibit any ribonuclease activity. This is Inactive ribonuclease-like protein 9 (RNASE9) from Macaca mulatta (Rhesus macaque).